The sequence spans 218 residues: ATP phosphoribosyltransferase (218 aa).

This sequence belongs to the ATP phosphoribosyltransferase family. Short subfamily. As to quaternary structure, heteromultimer composed of HisG and HisZ subunits.

Its subcellular location is the cytoplasm. The enzyme catalyses 1-(5-phospho-beta-D-ribosyl)-ATP + diphosphate = 5-phospho-alpha-D-ribose 1-diphosphate + ATP. Its pathway is amino-acid biosynthesis; L-histidine biosynthesis; L-histidine from 5-phospho-alpha-D-ribose 1-diphosphate: step 1/9. Catalyzes the condensation of ATP and 5-phosphoribose 1-diphosphate to form N'-(5'-phosphoribosyl)-ATP (PR-ATP). Has a crucial role in the pathway because the rate of histidine biosynthesis seems to be controlled primarily by regulation of HisG enzymatic activity. The protein is ATP phosphoribosyltransferase of Lactiplantibacillus plantarum (strain ATCC BAA-793 / NCIMB 8826 / WCFS1) (Lactobacillus plantarum).